A 470-amino-acid polypeptide reads, in one-letter code: FAD-dependent monooxygenase SAT7 (470 aa).

Residues 28–48 (GLSVAIVGGGIVGIALALGLV) traverse the membrane as a helical segment. Residues E58, A71, and R143 each contribute to the FAD site. Residues R227 and Y260 contribute to the active site. Residues D351 and A364 each contribute to the FAD site.

This sequence belongs to the paxM FAD-dependent monooxygenase family. It depends on FAD as a cofactor.

The protein localises to the membrane. It functions in the pathway mycotoxin biosynthesis. Its function is as follows. FAD-dependent monooxygenase; part of the satratoxin SC1 cluster involved in the biosynthesis of satratoxins, trichothecene mycotoxins that are associated with human food poisonings. Satratoxins are suggested to be made by products of multiple gene clusters (SC1, SC2 and SC3) that encode 21 proteins in all, including polyketide synthases, acetyltransferases, and other enzymes expected to modify the trichothecene skeleton. SC1 encodes 10 proteins, SAT1 to SAT10. The largest are SAT8, which encodes a putative polyketide synthase (PKS) with a conventional non-reducing architecture, and SAT10, a putative protein containing four ankyrin repeats and thus may be involved in protein scaffolding. The putative short-chain reductase SAT3 may assist the PKS in some capacity. SAT6 contains a secretory lipase domain and acts probably as a trichothecene esterase. SAT5 encodes a putative acetyltransferase, and so, with SAT6, may affect endogenous protection from toxicity. The probable transcription factor SAT9 may regulate the expression of the SC1 cluster. SC2 encodes proteins SAT11 to SAT16, the largest of which encodes the putative reducing PKS SAT13. SAT11 is a cytochrome P450 monooxygenase, while SAT14 and SAT16 are probable acetyltransferases. The SC2 cluster may be regulated by the transcription factor SAT15. SC3 is a small cluster that encodes 5 proteins, SAT17 to SAT21. SAT21 is a putative MFS-type transporter which may have a role in exporting secondary metabolites. The four other proteins putatively encoded in SC3 include the taurine hydroxylase-like protein SAT17, the O-methyltransferase SAT18, the acetyltransferase SAT19, and the Cys6-type zinc finger SAT20, the latter being probably involved in regulation of SC3 expression. The polypeptide is FAD-dependent monooxygenase SAT7 (Stachybotrys chartarum (strain CBS 109288 / IBT 7711) (Toxic black mold)).